Reading from the N-terminus, the 318-residue chain is Annexin D6 (318 aa).

Ala-2 is subject to N-acetylalanine. 4 Annexin repeats span residues 11-82 (PLPE…LWTL), 83-154 (DPTE…PLVS), 168-239 (KLAR…TAIK), and 243-314 (YPEK…ALLG). Ca(2+)-binding residues include Phe-24, Gly-26, Gly-28, and Glu-68. Ser-95 is subject to Phosphoserine. Phosphothreonine occurs at positions 100 and 112. Tyr-129 carries the post-translational modification Phosphotyrosine. Ca(2+) is bound by residues Ile-256, Arg-258, and Gly-260. Residue Tyr-285 is modified to Phosphotyrosine. Residue Ser-290 is modified to Phosphoserine. 2 residues coordinate Ca(2+): Asp-300 and Thr-301.

This sequence belongs to the annexin (TC 1.A.31.1) family. As to expression, expressed in flowers.

The chain is Annexin D6 (ANN6) from Arabidopsis thaliana (Mouse-ear cress).